We begin with the raw amino-acid sequence, 97 residues long: Putative membrane protein insertion efficiency factor (97 aa).

The segment at 72 to 97 (VPGAEPDQEQHQCTPLCNHHSEDHSQ) is disordered.

Belongs to the UPF0161 family.

Its subcellular location is the cell inner membrane. Its function is as follows. Could be involved in insertion of integral membrane proteins into the membrane. The sequence is that of Putative membrane protein insertion efficiency factor from Alcanivorax borkumensis (strain ATCC 700651 / DSM 11573 / NCIMB 13689 / SK2).